Consider the following 91-residue polypeptide: YcgL domain-containing protein Sde_1339 (91 aa).

Positions 1 to 85 constitute a YcgL domain; that stretch reads MIVDIYRSAK…PPESYMNEIP (85 aa). The disordered stretch occupies residues 72 to 91; it reads QMPPPPESYMNEIPNDKMPR.

The sequence is that of YcgL domain-containing protein Sde_1339 from Saccharophagus degradans (strain 2-40 / ATCC 43961 / DSM 17024).